The chain runs to 882 residues: Protein PML (882 aa).

The segment at 1–48 is disordered; that stretch reads MEPAPARSPRPQQDPARPQEPTMPPPETPSEGRQPSPSPSPTERAPAS. S8 carries the phosphoserine; by HIPK2 modification. A phosphoserine; by HIPK2 and MAPK1 mark is found at S36 and S38. Residue S48 is modified to Phosphoserine. Positions 57 and 60 each coordinate Zn(2+). Residues 57 to 92 form an RING-type zinc finger; that stretch reads CQQCQAEAKCPKLLPCLHTLCSGCLEASGMQCPICQ. K65 is covalently cross-linked (Glycyl lysine isopeptide (Lys-Gly) (interchain with G-Cter in SUMO1); alternate). A Glycyl lysine isopeptide (Lys-Gly) (interchain with G-Cter in SUMO2); alternate cross-link involves residue K65. Zn(2+) is bound by residues C72, H74, C77, C80, C88, and C91. S117 bears the Phosphoserine; by CHEK2 mark. A B box-type 1; atypical zinc finger spans residues 124–166; sequence DAQAVCTRCKESADFWCFECEQLLCAKCFEAHQWFLKHEARPL. Positions 129, 132, 151, and 155 each coordinate Zn(2+). K160 participates in a covalent cross-link: Glycyl lysine isopeptide (Lys-Gly) (interchain with G-Cter in SUMO1); alternate. K160 is covalently cross-linked (Glycyl lysine isopeptide (Lys-Gly) (interchain with G-Cter in SUMO2); alternate). K160 is covalently cross-linked (Glycyl lysine isopeptide (Lys-Gly) (interchain with G-Cter in SUMO1P1/SUMO5); alternate). The B box-type 2 zinc-finger motif lies at 183 to 236; sequence KTNNIFCSNPNHRTPTLTSIYCRGCSKPLCCSCALLDSSHSELKCDISAEIQQR. The Zn(2+) site is built by C189, H194, C215, and H222. Residues 228–253 adopt a coiled-coil conformation; the sequence is DISAEIQQRQEELDAMTQALQEQDSA. K380 participates in a covalent cross-link: Glycyl lysine isopeptide (Lys-Gly) (interchain with G-Cter in SUMO2); alternate. K380 is covalently cross-linked (Glycyl lysine isopeptide (Lys-Gly) (interchain with G-Cter in /SUMO5); alternate). A Glycyl lysine isopeptide (Lys-Gly) (interchain with G-Cter in ubiquitin); alternate cross-link involves residue K380. A Glycyl lysine isopeptide (Lys-Gly) (interchain with G-Cter in SUMO2) cross-link involves residue K394. Residue K400 forms a Glycyl lysine isopeptide (Lys-Gly) (interchain with G-Cter in SUMO1P1/SUMO5); alternate linkage. Glycyl lysine isopeptide (Lys-Gly) (interchain with G-Cter in ubiquitin); alternate cross-links involve residues K400 and K401. K401 participates in a covalent cross-link: Glycyl lysine isopeptide (Lys-Gly) (interchain with G-Cter in SUMO2); alternate. S403 carries the post-translational modification Phosphoserine; by MAPK1 and MAPK7. The interaction with PER2 stretch occupies residues 448–555; the sequence is GAHPVPVYAF…ASGAGEAEER (108 aa). A Glycyl lysine isopeptide (Lys-Gly) (interchain with G-Cter in SUMO2) cross-link involves residue K460. The tract at residues 467-589 is disordered; the sequence is DVSNTTTAQK…SESSDLQLEG (123 aa). Positions 468-484 are enriched in polar residues; sequence VSNTTTAQKRKCSQTQC. K476 participates in a covalent cross-link: Glycyl lysine isopeptide (Lys-Gly) (interchain with G-Cter in SUMO2); alternate. Residue K476 forms a Glycyl lysine isopeptide (Lys-Gly) (interchain with G-Cter in ubiquitin); alternate linkage. The short motif at 476 to 490 is the Nuclear localization signal element; that stretch reads KRKCSQTQCPRKVIK. A Glycyl lysine isopeptide (Lys-Gly) (interchain with G-Cter in SUMO2) cross-link involves residue K478. Residues K487 and K490 each participate in a glycyl lysine isopeptide (Lys-Gly) (interchain with G-Cter in SUMO2); alternate cross-link. N6-acetyllysine; alternate is present on K487. A compositionally biased stretch (basic and acidic residues) spans 489–501; sequence IKMESEEGKEARL. A Glycyl lysine isopeptide (Lys-Gly) (interchain with G-Cter in SUMO1); alternate cross-link involves residue K490. A Glycyl lysine isopeptide (Lys-Gly) (interchain with G-Cter in SUMO1P1/SUMO5); alternate cross-link involves residue K490. S493 carries the phosphoserine modification. K497 is covalently cross-linked (Glycyl lysine isopeptide (Lys-Gly) (interchain with G-Cter in SUMO1); alternate). A Glycyl lysine isopeptide (Lys-Gly) (interchain with G-Cter in SUMO2); alternate cross-link involves residue K497. A Glycyl lysine isopeptide (Lys-Gly) (interchain with G-Cter in SUMO1P1/SUMO5); alternate cross-link involves residue K497. Phosphoserine is present on S504. Residue S505 is modified to Phosphoserine; by MAPK1. Residues 505–516 are compositionally biased toward polar residues; the sequence is SPEQPRPSTSKA. S512 is subject to Phosphoserine. An N6-acetyllysine modification is found at K515. S518, S527, and S530 each carry phosphoserine. S518 bears the Phosphoserine; by CDK1 and CDK2 mark. Residues S527 and S530 each carry the phosphoserine; by MAPK1 modification. A sumo interaction motif (SIM) region spans residues 556 to 562; it reads VVVISSS. A Phosphoserine modification is found at S565. Residue S565 is modified to Phosphoserine; by CK2. Phosphothreonine is present on T867.

Key component of PML bodies. PML bodies are formed by the interaction of PML homodimers (via SUMO-binding motif) with sumoylated PML, leading to the assembly of higher oligomers. Several types of PML bodies have been observed. PML bodies can form hollow spheres that can sequester target proteins inside. Interacts (via SUMO-binding motif) with sumoylated proteins. Interacts (via C-terminus) with p53/TP53. Recruits p53/TP53 and CHEK2 into PML bodies, which promotes p53/TP53 phosphorylation at 'Ser-20' and prevents its proteasomal degradation. Interacts with MDM2, and sequesters MDM2 in the nucleolus, thereby preventing ubiquitination of p53/TP53. Interaction with PML-RARA oncoprotein and certain viral proteins causes disassembly of PML bodies and abolishes the normal PML function. Interacts with HIPK2, TERT, SIRT1, TOPBP1, TRIM27 and TRIM69. Interacts with ELF4 (via C-terminus). Interacts with ITPR3. Interacts (in the cytoplasm) with TGFBR1, TGFBR2 and PKM. Interacts (via the coiled-coil domain and when sumoylated) with SATB1. Interacts with UBE2I; the interaction is enhanced by arsenic binding. Interacts (PML-RARA oncoprotein, via the coiled-coil domain) with UBE2I; the interaction is enhanced by arsenic binding and is required for PML-RARA oncoprotein sumoylation and inhibition of RARA transactivational activity. Interacts with RB1, PPP1A, SMAD2, SMAD3, DAXX, RPL11 and MTOR. Interacts with PPARGC1A and KAT2A. Interacts with CSNK2A1 and CSNK2A3. Interacts with ANKRD2; the interaction is direct. Interacts (via SUMO-interacting motif) with sumoylated MORC3. Isoform PML-1, isoform PML-2, isoform PML-3, isoform PML-4, isoform PML-5 and isoform PML-6 interact with RNF4. Isoform PML-1 interacts with NLRP3. Isoform PML-1, isoform PML-2, isoform PML-3, isoform PML-4 and isoform PML-5 interact with MAGEA2, RBL2, PER2 and E2F4. Isoform PML-2 interacts with CIITA. Isoform PML-2, isoform PML-3 and isoform PML-4 interact with TBX2. Isoform PML-4 interacts with RANBP2, HDAC7, KAT6A, WRN, PIN1, TBX3 and phosphorylated MAPK1/ERK2. Isoform PML-4 interacts with the CTNNB1 and TCF7L2/TCF4 complex. Isoform PML-4 preferentially interacts with MAPK7/BMK1 although other isoforms (isoform PML-1, isoform PML-2, isoform PML-3 and isoform PML-6) also interact with it. Isoform PML-12 interacts with PIAS1, PIAS2 (isoform PIAS2-alpha) and CSNK2A1/CK2. Interacts with TRIM16. Interacts with PRDM1/Blimp-1. Interacts (via RING-type zinc finger) with EIF4E; the interaction results in conformational changes of both interacting proteins and reduces EIF4E affinity for the 5' m7G cap of mRNA, thus reducing EIF4E-mediated mRNA nuclear export. As to quaternary structure, (Microbial infection) Interacts with Lassa virus Z protein and rabies virus phosphoprotein. In terms of assembly, (Microbial infection) Isoform PML-1 interacts with herpes simplex virus-1/HHV-1 ICP0. (Microbial infection) Isoform PML-2 interacts with human adenovirus 2 E1A and this interaction stimulates E1A-dependent transcriptional activation. As to quaternary structure, (Microbial infection) Isoform PML-4 interacts with VZV capsid protein VP26/ORF23 capsid protein. In terms of assembly, (Microbial infection) The sumoylated isoform PML-4 interacts with encephalomyocarditis virus (EMCV) RNA-directed RNA polymerase 3D-POL (P3D-POL). (Microbial infection) Isoform PML-6 interacts with moloney murine leukemia virus (MoMLV) integrase (IN) and reverse transcriptase (RT). As to quaternary structure, (Microbial infection) Isoform PML-4 and isoform PML-5 interact with human adenovirus 5 E1B-55K protein; these interactions promote efficient subnuclear targeting of E1B-55K to PML nuclear bodies. In terms of assembly, (Microbial infection) Isoform PML-3 interacts (via RING-type zinc finger) with human foamy virus bel1/tas and bet. (Microbial infection) Interacts with human cytomegalovirus (HHV-5) immediate early protein IE1; this interaction mediates PML desumoylation and PML-mediated sumoylation of IE1. Post-translationally, ubiquitinated; mediated by RNF4, RNF111, UHRF1, UBE3A/E6AP, BCR(KLHL20) E3 ubiquitin ligase complex E3 ligase complex, SIAH1 or SIAH2 and leading to subsequent proteasomal degradation. Ubiquitination by BCR(KLHL20) E3 ubiquitin ligase complex E3 ligase complex requires CDK1/2-mediated phosphorylation at Ser-518 which in turn is recognized by prolyl-isopeptidase PIN1 and PIN1-catalyzed isomerization further potentiates PML interaction with KLHL20. 'Lys-6'-, 'Lys-11'-, 'Lys-48'- and 'Lys-63'-linked polyubiquitination by RNF4 is polysumoylation-dependent. Ubiquitination by RNF111 is polysumoylation-dependent. Sumoylation regulates PML's: stability in response to extracellular or intracellular stimuli, transcription directly and indirectly, through sequestration of or dissociation of the transcription factors from PML-NBs, ability to regulate apoptosis and its anti-viral activities. It is also essential for: maintaining proper PML nuclear bodies (PML-NBs) structure and normal function, recruitment of components of PML-NBs, the turnover and retention of PML in PML-NBs and the integrity of PML-NBs. Undergoes 'Lys-11'-linked sumoylation. Sumoylation on all three sites (Lys-65, Lys-160 and Lys-490) is required for nuclear body formation. Sumoylation on Lys-160 is a prerequisite for sumoylation on Lys-65. Lys-65 and Lys-160 are sumoylated by PISA1 and PIAS2. PIAS1-mediated sumoylation of PML promotes its interaction with CSNK2A1/CK2 and phosphorylation at Ser-565 which in turn triggers its ubiquitin-mediated degradation. PIAS1-mediated sumoylation of PML-RARA promotes its ubiquitin-mediated degradation. The PML-RARA fusion protein requires the coiled-coil domain for sumoylation. Sumoylation at Lys-490 by RANBP2 is essential for the proper assembly of PML-NBs. SUMO1P1/SUMO5 conjugated PML at Lys-160, Lys-380, Lys-400, Lys-490 and Lys-497, but Lys-380, Lys-400 and Lys-497 are not key acceptor lysines. SUMO1P1/SUMO5 forms polymeric chain on Lys-160 of PML by successive conjugation at 'Lys-18'; facilitating recruitment of PML-NB components, which enlarges PML. SUMO1P1/SUMO5 conjugation of PML increases SUMO2/3 conjugation, which leads to the recruitment of RNF4 and ubiquitin-dependent disintegration of PML-NBs. SUMO1P1/SUMO5 monoconjugated Lys-490. DNA damage triggers its sumoylation while some but not all viral infections can abolish sumoylation. Desumoylated by SENP1, SENP2, SENP3, SENP5 and SENP6. Arsenic induces PML and PML-RARA polysumoylation and their subsequent RNF4-dependent ubiquitination and proteasomal degradation, and is used as treatment in acute promyelocytic leukemia (APL). The nuclear isoforms (isoform PML-1, isoform PML-2, isoform PML-3, isoform PML-4, isoform PML-5 and isoform PML-6) show an increased sumoylation in response to arsenic trioxide. The cytoplasmic isoform PML-7 is not sumoylated. In terms of processing, phosphorylation is a major regulatory mechanism that controls PML protein abundance and the number and size of PML nuclear bodies (PML-NBs). Phosphorylated in response to DNA damage, probably by ATR. HIPK2-mediated phosphorylation at Ser-8, Ser-36 and Ser-38 leads to increased accumulation of PML protein and its sumoylation and is required for the maximal pro-apoptotic activity of PML after DNA damage. CHEK2-mediated phosphorylation at Ser-117 is important for PML-mediated apoptosis following DNA damage. MAPK1-mediated phosphorylations at Ser-403, Ser-505, Ser-527 and Ser-530 and CDK1/2-mediated phosphorylation at Ser-518 promote PIN1-dependent PML degradation. CK2-mediated phosphorylation at Ser-565 primes PML ubiquitination via an unidentified ubiquitin ligase. Post-translationally, (Microbial infection) Upon infection with Epstein-Barr virus, phosphorylated by CK2. Viral EBNA1 increases the association of CK2 with PML proteins, which increases PML phosphorylation by CK2, triggering the USP7-dependent polyubiquitylation and degradation of PML. Acetylation at Lys-487 is essential for its nuclear localization. Deacetylated at Lys-487 by SIRT1 and this deacetylation promotes PML control of PER2 nuclear localization. In terms of processing, (Microbial infection) Immediate early protein IE1 of human cytomegalovirus (HHV-5) interferes with the sumoylation of PML. Immediate early protein IE1 inhibits PML de novo sumoylation. Post-translationally, (Microbial infection) Cleaved at two different sites by enterovirus 71 protease 3C, leading to impaired PML-Nuclear bodies formation.

It localises to the nucleus. The protein resides in the nucleoplasm. Its subcellular location is the cytoplasm. The protein localises to the PML body. It is found in the nucleolus. It localises to the endoplasmic reticulum membrane. The protein resides in the early endosome membrane. The protein operates within protein modification; protein sumoylation. Functionally, functions via its association with PML-nuclear bodies (PML-NBs) in a wide range of important cellular processes, including tumor suppression, transcriptional regulation, apoptosis, senescence, DNA damage response, and viral defense mechanisms. Acts as the scaffold of PML-NBs allowing other proteins to shuttle in and out, a process which is regulated by SUMO-mediated modifications and interactions. Inhibits EIF4E-mediated mRNA nuclear export by reducing EIF4E affinity for the 5' 7-methylguanosine (m7G) cap of target mRNAs. Isoform PML-4 has a multifaceted role in the regulation of apoptosis and growth suppression: activates RB1 and inhibits AKT1 via interactions with PP1 and PP2A phosphatases respectively, negatively affects the PI3K pathway by inhibiting MTOR and activating PTEN, and positively regulates p53/TP53 by acting at different levels (by promoting its acetylation and phosphorylation and by inhibiting its MDM2-dependent degradation). Isoform PML-4 also: acts as a transcriptional repressor of TBX2 during cellular senescence and the repression is dependent on a functional RBL2/E2F4 repressor complex, regulates double-strand break repair in gamma-irradiation-induced DNA damage responses via its interaction with WRN, acts as a negative regulator of telomerase by interacting with TERT, and regulates PER2 nuclear localization and circadian function. Isoform PML-6 inhibits specifically the activity of the tetrameric form of PKM. The nuclear isoforms (isoform PML-1, isoform PML-2, isoform PML-3, isoform PML-4 and isoform PML-5) in concert with SATB1 are involved in local chromatin-loop remodeling and gene expression regulation at the MHC-I locus. Isoform PML-2 is required for efficient IFN-gamma induced MHC II gene transcription via regulation of CIITA. Cytoplasmic PML is involved in the regulation of the TGF-beta signaling pathway. PML also regulates transcription activity of ELF4 and can act as an important mediator for TNF-alpha- and IFN-alpha-mediated inhibition of endothelial cell network formation and migration. Its function is as follows. Exhibits antiviral activity against both DNA and RNA viruses. The antiviral activity can involve one or several isoform(s) and can be enhanced by the permanent PML-NB-associated protein DAXX or by the recruitment of p53/TP53 within these structures. Isoform PML-4 restricts varicella zoster virus (VZV) via sequestration of virion capsids in PML-NBs thereby preventing their nuclear egress and inhibiting formation of infectious virus particles. The sumoylated isoform PML-4 restricts rabies virus by inhibiting viral mRNA and protein synthesis. The cytoplasmic isoform PML-14 can restrict herpes simplex virus-1 (HHV-1) replication by sequestering the viral E3 ubiquitin-protein ligase ICP0 in the cytoplasm. Isoform PML-6 shows restriction activity towards human cytomegalovirus (HHV-5) and influenza A virus strains PR8(H1N1) and ST364(H3N2). Sumoylated isoform PML-4 and isoform PML-12 show antiviral activity against encephalomyocarditis virus (EMCV) by promoting nuclear sequestration of viral polymerase (P3D-POL) within PML NBs. Isoform PML-3 exhibits antiviral activity against poliovirus by inducing apoptosis in infected cells through the recruitment and the activation of p53/TP53 in the PML-NBs. Isoform PML-3 represses human foamy virus (HFV) transcription by complexing the HFV transactivator, bel1/tas, preventing its binding to viral DNA. PML may positively regulate infectious hepatitis C viral (HCV) production and isoform PML-2 may enhance adenovirus transcription. Functions as an E3 SUMO-protein ligase that sumoylates (HHV-5) immediate early protein IE1, thereby participating in the antiviral response. Isoforms PML-3 and PML-6 display the highest levels of sumoylation activity. The chain is Protein PML (PML) from Homo sapiens (Human).